Here is a 514-residue protein sequence, read N- to C-terminus: Efflux pump aflT (514 aa).

The next 10 membrane-spanning stretches (helical) occupy residues 13-33 (ISGM…FCVA), 61-81 (SAYL…YALF), 85-105 (WVFL…GVAP), 116-136 (IAGV…AHIV), 146-166 (GLLG…GGAF), 174-194 (WCFY…LFLL), 218-238 (GTIV…WGGV), 247-267 (IIAL…IQVL), 289-309 (VFVF…PIWF), and 321-341 (GIDS…SGAV). N-linked (GlcNAc...) asparagine glycosylation is present at Asn-343. 4 helical membrane passes run 351-371 (WFIV…LFTV), 378-398 (WIGF…QGAV), 411-431 (IGTA…TSVA), and 485-505 (LDVF…AVGI).

It belongs to the major facilitator superfamily. TCR/Tet family.

The protein localises to the cell membrane. In terms of biological role, efflux pump; part of the gene cluster that mediates the biosynthesis of aflatoxins. The chain is Efflux pump aflT from Aspergillus parasiticus (strain ATCC 56775 / NRRL 5862 / SRRC 143 / SU-1).